The following is a 152-amino-acid chain: Ribosome maturation factor RimP (152 aa).

Belongs to the RimP family.

The protein localises to the cytoplasm. In terms of biological role, required for maturation of 30S ribosomal subunits. This Erwinia tasmaniensis (strain DSM 17950 / CFBP 7177 / CIP 109463 / NCPPB 4357 / Et1/99) protein is Ribosome maturation factor RimP.